Reading from the N-terminus, the 351-residue chain is Large ribosomal subunit protein uL3 (351 aa).

Disordered regions lie at residues 1-31 (MGHR…TPRT) and 246-271 (KGSR…GQLG).

This sequence belongs to the universal ribosomal protein uL3 family. Part of the 50S ribosomal subunit. Forms a cluster with proteins L14 and L24e.

In terms of biological role, one of the primary rRNA binding proteins, it binds directly near the 3'-end of the 23S rRNA, where it nucleates assembly of the 50S subunit. In Saccharolobus islandicus (strain M.16.27) (Sulfolobus islandicus), this protein is Large ribosomal subunit protein uL3.